Reading from the N-terminus, the 421-residue chain is Histidine--tRNA ligase (421 aa).

It belongs to the class-II aminoacyl-tRNA synthetase family. Homodimer.

It localises to the cytoplasm. It carries out the reaction tRNA(His) + L-histidine + ATP = L-histidyl-tRNA(His) + AMP + diphosphate + H(+). The sequence is that of Histidine--tRNA ligase from Thermus thermophilus (strain ATCC BAA-163 / DSM 7039 / HB27).